The sequence spans 583 residues: Aspartate--tRNA ligase (583 aa).

E174 is an L-aspartate binding site. An aspartate region spans residues 198 to 201 (QITK). L-aspartate is bound at residue R220. ATP contacts are provided by residues 220 to 222 (RDE) and Q229. Position 443 (H443) interacts with L-aspartate. E477 is an ATP binding site. Residue R484 coordinates L-aspartate. 529–532 (GLDR) contacts ATP.

This sequence belongs to the class-II aminoacyl-tRNA synthetase family. Type 1 subfamily. As to quaternary structure, homodimer.

It localises to the cytoplasm. The catalysed reaction is tRNA(Asp) + L-aspartate + ATP = L-aspartyl-tRNA(Asp) + AMP + diphosphate. In terms of biological role, catalyzes the attachment of L-aspartate to tRNA(Asp) in a two-step reaction: L-aspartate is first activated by ATP to form Asp-AMP and then transferred to the acceptor end of tRNA(Asp). The polypeptide is Aspartate--tRNA ligase (Streptococcus thermophilus (strain ATCC BAA-250 / LMG 18311)).